A 202-amino-acid polypeptide reads, in one-letter code: MIVAGVDEVGRGCLFGPVWAAAVILKAEAFDRLPALGVTDSKALSAKRRQALLPEIHSHCLSYGLGQASAACIDAVGIRAATELAMCRALQRLCHSPDHVLVDGSLPLRPWPGSQETVVAGDSHCLAIACASILAKEGRDALLQRLDQRWPGYGLASHKGYGTKAHRTALLQWGPTPLHRLSFLAPELKGGSPAGASSGNLE.

Residues 1 to 195 (MIVAGVDEVG…PELKGGSPAG (195 aa)) enclose the RNase H type-2 domain. The a divalent metal cation site is built by D7, E8, and D103.

The protein belongs to the RNase HII family. It depends on Mn(2+) as a cofactor. The cofactor is Mg(2+).

It is found in the cytoplasm. It catalyses the reaction Endonucleolytic cleavage to 5'-phosphomonoester.. In terms of biological role, endonuclease that specifically degrades the RNA of RNA-DNA hybrids. The protein is Ribonuclease HII of Synechococcus sp. (strain RCC307).